The sequence spans 110 residues: Insulin (110 aa).

The first 24 residues, 1 to 24 (MASLAALLPLLALLVLCRLDPAQA), serve as a signal peptide directing secretion. Cystine bridges form between Cys-31–Cys-96, Cys-43–Cys-109, and Cys-95–Cys-100. A propeptide spans 57 to 87 (EVEELQVGQAELGGGPGAGGLQPSALELALQ) (c peptide).

Belongs to the insulin family. As to quaternary structure, heterodimer of a B chain and an A chain linked by two disulfide bonds.

It is found in the secreted. Its function is as follows. Insulin decreases blood glucose concentration. It increases cell permeability to monosaccharides, amino acids and fatty acids. It accelerates glycolysis, the pentose phosphate cycle, and glycogen synthesis in liver. The protein is Insulin (INS) of Oryctolagus cuniculus (Rabbit).